A 426-amino-acid chain; its full sequence is Glutamate-1-semialdehyde 2,1-aminomutase (426 aa).

Lys-265 carries the N6-(pyridoxal phosphate)lysine modification.

This sequence belongs to the class-III pyridoxal-phosphate-dependent aminotransferase family. HemL subfamily. In terms of assembly, homodimer. Requires pyridoxal 5'-phosphate as cofactor.

The protein resides in the cytoplasm. The catalysed reaction is (S)-4-amino-5-oxopentanoate = 5-aminolevulinate. It participates in porphyrin-containing compound metabolism; protoporphyrin-IX biosynthesis; 5-aminolevulinate from L-glutamyl-tRNA(Glu): step 2/2. The chain is Glutamate-1-semialdehyde 2,1-aminomutase from Salmonella newport (strain SL254).